Here is a 236-residue protein sequence, read N- to C-terminus: Biosynthetic peptidoglycan transglycosylase (236 aa).

The chain crosses the membrane as a helical span at residues glycine 20–proline 40.

It belongs to the glycosyltransferase 51 family.

The protein resides in the cell inner membrane. The enzyme catalyses [GlcNAc-(1-&gt;4)-Mur2Ac(oyl-L-Ala-gamma-D-Glu-L-Lys-D-Ala-D-Ala)](n)-di-trans,octa-cis-undecaprenyl diphosphate + beta-D-GlcNAc-(1-&gt;4)-Mur2Ac(oyl-L-Ala-gamma-D-Glu-L-Lys-D-Ala-D-Ala)-di-trans,octa-cis-undecaprenyl diphosphate = [GlcNAc-(1-&gt;4)-Mur2Ac(oyl-L-Ala-gamma-D-Glu-L-Lys-D-Ala-D-Ala)](n+1)-di-trans,octa-cis-undecaprenyl diphosphate + di-trans,octa-cis-undecaprenyl diphosphate + H(+). The protein operates within cell wall biogenesis; peptidoglycan biosynthesis. Its function is as follows. Peptidoglycan polymerase that catalyzes glycan chain elongation from lipid-linked precursors. This Mesorhizobium japonicum (strain LMG 29417 / CECT 9101 / MAFF 303099) (Mesorhizobium loti (strain MAFF 303099)) protein is Biosynthetic peptidoglycan transglycosylase.